Here is a 456-residue protein sequence, read N- to C-terminus: Putative F-box/LRR-repeat protein At5g02700 (456 aa).

The F-box domain maps to 26-72 (ADFINYMPDDILHHILSFIPTDLAMRTSVLSRRWRHVWCETPCLDIT). LRR repeat units follow at residues 126–154 (VRDF…DVTL), 177–202 (FCQI…TLDT), 206–224 (LERL…DINQ), 271–300 (LSPL…TVGE), and 330–355 (FVRS…RPST).

The protein is Putative F-box/LRR-repeat protein At5g02700 of Arabidopsis thaliana (Mouse-ear cress).